The sequence spans 195 residues: C2 domain-containing protein DDB_G0290753 (195 aa).

Positions 38–161 (KKLTKETKFE…NIKKYSYTFK (124 aa)) constitute a C2 domain. 5 residues coordinate Ca(2+): D72, D78, D131, D133, and D139.

Requires Ca(2+) as cofactor.

The protein is C2 domain-containing protein DDB_G0290753 of Dictyostelium discoideum (Social amoeba).